Reading from the N-terminus, the 106-residue chain is Thiosulfate sulfurtransferase GlpE (106 aa).

The 89-residue stretch at 17-105 folds into the Rhodanese domain; that stretch reads QLPSVCLADI…WRHVYPYTAT (89 aa). Cys65 serves as the catalytic Cysteine persulfide intermediate.

Belongs to the GlpE family.

The protein resides in the cytoplasm. It carries out the reaction thiosulfate + hydrogen cyanide = thiocyanate + sulfite + 2 H(+). The enzyme catalyses thiosulfate + [thioredoxin]-dithiol = [thioredoxin]-disulfide + hydrogen sulfide + sulfite + 2 H(+). Its function is as follows. Transferase that catalyzes the transfer of sulfur from thiosulfate to thiophilic acceptors such as cyanide or dithiols. May function in a CysM-independent thiosulfate assimilation pathway by catalyzing the conversion of thiosulfate to sulfite, which can then be used for L-cysteine biosynthesis. This chain is Thiosulfate sulfurtransferase GlpE, found in Tolumonas auensis (strain DSM 9187 / NBRC 110442 / TA 4).